We begin with the raw amino-acid sequence, 1023 residues long: uncharacterized protein (1023 aa).

The disordered stretch occupies residues 1–35 (MAEKRPLGPLGPMMYGKLPRLEPDPGPGHSLPLSA). Residue K17 is modified to N6-acetyllysine. S206 and S383 each carry phosphoserine. Disordered stretches follow at residues 381-501 (GASP…PVID), 518-551 (PEPR…ASRS), 703-742 (PAPA…PEQH), 907-980 (EART…TLRA), and 1002-1023 (KASG…THHL). T389 carries the post-translational modification Phosphothreonine. A compositionally biased stretch (polar residues) spans 391-400 (PSHSQNSVQP). Composition is skewed to basic and acidic residues over residues 425 to 436 (RPAEKPTPEAQE), 443 to 454 (CRKEQLQPRPNE), and 477 to 490 (CAKE…KDAR). Residues S493 and S494 each carry the phosphoserine modification. Over residues 706–722 (ASAPPPSPAPAPAPASG) the composition is skewed to pro residues. A phosphoserine mark is found at S912, S964, and S972. A compositionally biased stretch (low complexity) spans 963-972 (PSPSSGASTS).

This is an uncharacterized protein from Mus musculus (Mouse).